A 383-amino-acid polypeptide reads, in one-letter code: Dihydroorotase (383 aa).

The Zn(2+) site is built by His47 and His49. Residues 49–51 (HFR) and Asn81 each bind substrate. Residues Lys128, His159, His198, and Asp264 each coordinate Zn(2+). Lys128 carries the N6-carboxylysine modification. The active site involves Asp264. Substrate is bound by residues His268 and 280-281 (PG).

Belongs to the metallo-dependent hydrolases superfamily. DHOase family. Class I DHOase subfamily. Requires Zn(2+) as cofactor.

The catalysed reaction is (S)-dihydroorotate + H2O = N-carbamoyl-L-aspartate + H(+). It functions in the pathway pyrimidine metabolism; UMP biosynthesis via de novo pathway; (S)-dihydroorotate from bicarbonate: step 3/3. Its function is as follows. Catalyzes the reversible cyclization of carbamoyl aspartate to dihydroorotate. This chain is Dihydroorotase, found in Pyrobaculum aerophilum (strain ATCC 51768 / DSM 7523 / JCM 9630 / CIP 104966 / NBRC 100827 / IM2).